A 174-amino-acid chain; its full sequence is Protein-lysine myristoyltransferase HlyC (174 aa).

Residues H23 and D92 contribute to the active site. H151 contacts heme.

It belongs to the RTX toxin acyltransferase family. As to quaternary structure, monomer. Proteolytically cleaved by the protease systems ClpAP, ClpXP and FtsH, leading to its degradation.

Its subcellular location is the cytoplasm. The catalysed reaction is tetradecanoyl-[ACP] + L-lysyl-[protein] = N(6)-tetradecanoyl-L-lysyl-[protein] + holo-[ACP] + H(+). Its activity is regulated as follows. The acyltransferase activity is inhibited by heme. Functionally, protein-lysine myristoyltransferase that catalyzes myristoylation of the protoxin (HlyA) at two internal lysine residues, thereby converting it to the active toxin. In Escherichia coli, this protein is Protein-lysine myristoyltransferase HlyC.